Consider the following 434-residue polypeptide: Serine--tRNA ligase (434 aa).

237-239 (TAE) lines the L-serine pocket. 268–270 (RAE) lines the ATP pocket. E291 is an L-serine binding site. Residue 358-361 (EISS) participates in ATP binding. L-serine is bound at residue S393.

Belongs to the class-II aminoacyl-tRNA synthetase family. Type-1 seryl-tRNA synthetase subfamily. Homodimer. The tRNA molecule binds across the dimer.

Its subcellular location is the cytoplasm. The enzyme catalyses tRNA(Ser) + L-serine + ATP = L-seryl-tRNA(Ser) + AMP + diphosphate + H(+). It carries out the reaction tRNA(Sec) + L-serine + ATP = L-seryl-tRNA(Sec) + AMP + diphosphate + H(+). The protein operates within aminoacyl-tRNA biosynthesis; selenocysteinyl-tRNA(Sec) biosynthesis; L-seryl-tRNA(Sec) from L-serine and tRNA(Sec): step 1/1. In terms of biological role, catalyzes the attachment of serine to tRNA(Ser). Is also able to aminoacylate tRNA(Sec) with serine, to form the misacylated tRNA L-seryl-tRNA(Sec), which will be further converted into selenocysteinyl-tRNA(Sec). This is Serine--tRNA ligase from Rhodopseudomonas palustris (strain ATCC BAA-98 / CGA009).